We begin with the raw amino-acid sequence, 34 residues long: Toxin Ptu1 (34 aa).

3 disulfide bridges follow: cysteine 5/cysteine 20, cysteine 12/cysteine 26, and cysteine 19/cysteine 33.

It localises to the secreted. In terms of biological role, binds reversibly and blocks N-type voltage-gated calcium channels (Cav). This chain is Toxin Ptu1, found in Peirates turpis (Assassin bug).